A 287-amino-acid polypeptide reads, in one-letter code: Protease HtpX (287 aa).

The next 2 helical transmembrane spans lie at 4–24 and 33–53; these read IFLLIVTNLAVLLVASIVMSI and GGLLVFAAIFGFGGAFISLAI. His-139 serves as a coordination point for Zn(2+). Glu-140 is an active-site residue. His-143 lines the Zn(2+) pocket. 2 helical membrane-spanning segments follow: residues 154–174 and 195–215; these read LIQGVVNTFVIFAARVVAGII and AVVFVLDMLFGILASIIVAYF. Glu-220 is a binding site for Zn(2+).

It belongs to the peptidase M48B family. Zn(2+) is required as a cofactor.

It is found in the cell inner membrane. This Shewanella oneidensis (strain ATCC 700550 / JCM 31522 / CIP 106686 / LMG 19005 / NCIMB 14063 / MR-1) protein is Protease HtpX.